The chain runs to 192 residues: Immunoglobulin superfamily member 23 (192 aa).

Residues 1–26 (MRAKPQSPLPRNPVPAWSPPTTTTDP) form a disordered region. The span at 7–18 (SPLPRNPVPAWS) shows a compositional bias: pro residues. The Ig-like domain occupies 20–128 (PTTTTDPMLE…QLVSEPVTIS (109 aa)). Asparagine 64 is a glycosylation site (N-linked (GlcNAc...) asparagine). The helical transmembrane segment at 158–178 (LLAAGILGAGALIAGMCFIII) threads the bilayer.

Expressed in bone and small intestine. Highly expressed in osteoclasts, and low expressed in osteoblasts and peripheral blood mononuclear cells (PBMCs).

It localises to the cell membrane. May be involved in osteoclast differentiation. This chain is Immunoglobulin superfamily member 23, found in Homo sapiens (Human).